The primary structure comprises 1135 residues: Potassium channel subfamily T member 2 (1135 aa).

At 1-63 (MVDLESEVPP…KNQRSSLRIR (63 aa)) the chain is on the cytoplasmic side. A helical membrane pass occupies residues 64–84 (LFNFSLKLLSCLLYIIRVLLE). Topologically, residues 85 to 101 (NPSQGNEWSHIFWVNRS) are extracellular. The N-linked (GlcNAc...) asparagine glycan is linked to Asn-99. The chain crosses the membrane as a helical span at residues 102-122 (LPLWGLQVSVALISLFETILL). Residues 123-137 (GYLSYKGNIWEQILR) are Cytoplasmic-facing. A helical membrane pass occupies residues 138 to 158 (IPFILEIINAVPFIISIFWPS). Residues 159 to 164 (LRNLFV) are Extracellular-facing. The helical transmembrane segment at 165–185 (PVFLNCWLAKHALENMINDLH) threads the bilayer. The Cytoplasmic portion of the chain corresponds to 186 to 198 (RAIQRTQSAMFNQ). Residues 199-219 (VLILISTLLCLIFTCICGIQH) traverse the membrane as a helical segment. The Extracellular portion of the chain corresponds to 220–228 (LERIGKKLN). The segment at residues 229 to 249 (LFDSLYFCIVTFSTVGFGDVT) is an intramembrane region (pore-forming). Over 250–256 (PETWSSK) the chain is Extracellular. A helical membrane pass occupies residues 257 to 277 (LFVVAMICVALVVLPIQFEQL). At 278–1135 (AYLWMERQKS…GQDSREETQL (858 aa)) the chain is on the cytoplasmic side. RCK N-terminal domains lie at 299–435 (EKHV…DHVV) and 718–858 (NKLI…CYSL). Disordered regions lie at residues 977 to 1010 (VEEW…HPLL), 1017 to 1036 (WARR…AEKI), and 1113 to 1135 (SEPS…ETQL). A compositionally biased stretch (basic residues) spans 1017–1030 (WARRLSRKGPKHSG). The segment covering 1118–1127 (RNSICNVTGQ) has biased composition (polar residues).

Belongs to the potassium channel family. Calcium-activated (TC 1.A.1.3) subfamily. KCa4.2/KCNT2 sub-subfamily. Homotetramer. Forms heteromeric channels with KCNT1; these heterodimer channels differ from the homomers in their unitary conductance, kinetic behavior, subcellular localization, and response to activation of protein kinase C. In terms of processing, phosphorylated by protein kinase C. Phosphorylation of the C-terminal domain inhibits channel activity.

The protein resides in the cell membrane. The catalysed reaction is K(+)(in) = K(+)(out). Its activity is regulated as follows. Are normally in a closed state unless activated by an increase in intracellular Na(+) and Cl(-). Inhibited upon stimulation of G-protein coupled receptors, such as CHRM1 and GRM1. There is conflicting data about the effect of ATP on KNCT2 channels activity. Intracellular ATP was initially report to inhibit the channel activity. However, others studies conclude that KNCT2 channels are not inhibited by intracellular ATP. Functionally, sodium-activated and chloride-activated potassium channel. Produces rapidly activating outward rectifier K(+) currents. Contributes to regulate neuronal excitability. This Homo sapiens (Human) protein is Potassium channel subfamily T member 2 (KCNT2).